A 156-amino-acid chain; its full sequence is Small ribosomal subunit protein uS7 (156 aa).

Belongs to the universal ribosomal protein uS7 family. As to quaternary structure, part of the 30S ribosomal subunit. Contacts proteins S9 and S11.

One of the primary rRNA binding proteins, it binds directly to 16S rRNA where it nucleates assembly of the head domain of the 30S subunit. Is located at the subunit interface close to the decoding center, probably blocks exit of the E-site tRNA. In Marinobacter nauticus (strain ATCC 700491 / DSM 11845 / VT8) (Marinobacter aquaeolei), this protein is Small ribosomal subunit protein uS7.